The sequence spans 262 residues: (2Z,6E)-farnesyl diphosphate synthase (262 aa).

The active site involves D40. D40 contributes to the Mg(2+) binding site. Substrate is bound by residues 41 to 44 (GNRR), W45, and 86 to 88 (STE). N89 (proton acceptor) is an active-site residue. Substrate is bound by residues R92, R211, and 217-219 (RLS). Residue E230 participates in Mg(2+) binding.

Belongs to the UPP synthase family. Z-FPP synthase subfamily. Homodimer. Mg(2+) is required as a cofactor.

The protein localises to the cytoplasm. It is found in the cell membrane. The catalysed reaction is isopentenyl diphosphate + (2E)-geranyl diphosphate = (2Z,6E)-farnesyl diphosphate + diphosphate. Catalyzes the condensation of only one isopentenyl pyrophosphate (IPP) unit in the cis configuration to E-geranyl diphosphate (E-GPP) generating the 15 carbon product (2Z,6E)-farnesyl diphosphate (Z-FPP or EZ-FPP). Z-FPP is the precursor of decaprenyl diphosphate, which has a central role in the biosynthesis of the mycobacterial cell wall. In Mycobacterium tuberculosis (strain CDC 1551 / Oshkosh), this protein is (2Z,6E)-farnesyl diphosphate synthase.